The primary structure comprises 307 residues: uncharacterized protein (307 aa).

The disordered stretch occupies residues 254–278 (HSRHHRRHHRRHHHHHHQNSSHSDE). The span at 255-272 (SRHHRRHHRRHHHHHHQN) shows a compositional bias: basic residues.

To yeast YOR062c.

This is an uncharacterized protein from Saccharomyces cerevisiae (strain ATCC 204508 / S288c) (Baker's yeast).